We begin with the raw amino-acid sequence, 190 residues long: R46 site-specific recombinase (190 aa).

Residues 2–137 (RLFGYARVST…EGRQEAKLKG (136 aa)) enclose the Resolvase/invertase-type recombinase catalytic domain. Ser10 functions as the O-(5'-phospho-DNA)-serine intermediate in the catalytic mechanism. Residues 161 to 180 (ATDIARRLSIARSTVYKILE) constitute a DNA-binding region (H-T-H motif).

The protein belongs to the site-specific recombinase resolvase family.

Its function is as follows. Site-specific recombination protein. The polypeptide is R46 site-specific recombinase (tnpR) (Escherichia coli).